Reading from the N-terminus, the 67-residue chain is Bowman-Birk type major trypsin inhibitor (67 aa).

Disulfide bonds link C8-C63, C9-C24, C14-C22, C31-C38, and C35-C51.

The protein belongs to the Bowman-Birk serine protease inhibitor family.

This is Bowman-Birk type major trypsin inhibitor from Setaria italica (Foxtail millet).